The sequence spans 598 residues: UvrABC system protein C (598 aa).

Positions 13 to 91 (TLPGVYRMVD…IKGLKPRFNI (79 aa)) constitute a GIY-YIG domain. One can recognise a UVR domain in the interval 200–235 (TALTEEITAQMNAAAENLDFETAAYLRDRLRMLATV).

The protein belongs to the UvrC family. As to quaternary structure, interacts with UvrB in an incision complex.

The protein localises to the cytoplasm. Functionally, the UvrABC repair system catalyzes the recognition and processing of DNA lesions. UvrC both incises the 5' and 3' sides of the lesion. The N-terminal half is responsible for the 3' incision and the C-terminal half is responsible for the 5' incision. This is UvrABC system protein C from Thiobacillus denitrificans (strain ATCC 25259 / T1).